The chain runs to 680 residues: DNA-directed RNA polymerase subunit beta' (680 aa).

4 residues coordinate Zn(2+): Cys-69, Cys-71, Cys-87, and Cys-90. Residues Asp-489, Asp-491, and Asp-493 each contribute to the Mg(2+) site.

Belongs to the RNA polymerase beta' chain family. RpoC1 subfamily. In terms of assembly, in plastids the minimal PEP RNA polymerase catalytic core is composed of four subunits: alpha, beta, beta', and beta''. When a (nuclear-encoded) sigma factor is associated with the core the holoenzyme is formed, which can initiate transcription. Requires Mg(2+) as cofactor. Zn(2+) is required as a cofactor.

It localises to the plastid. The protein resides in the chloroplast. The enzyme catalyses RNA(n) + a ribonucleoside 5'-triphosphate = RNA(n+1) + diphosphate. Functionally, DNA-dependent RNA polymerase catalyzes the transcription of DNA into RNA using the four ribonucleoside triphosphates as substrates. This Nasturtium officinale (Watercress) protein is DNA-directed RNA polymerase subunit beta'.